Here is a 322-residue protein sequence, read N- to C-terminus: ATP-dependent 6-phosphofructokinase (322 aa).

G11 is a binding site for ATP. 21–25 (RAVVR) is a binding site for ADP. ATP contacts are provided by residues 72 to 73 (RC) and 102 to 105 (GDGS). D103 serves as a coordination point for Mg(2+). 127–129 (TID) lines the substrate pocket. D129 (proton acceptor) is an active-site residue. R156 contacts ADP. Substrate-binding positions include R164 and 171 to 173 (MGR). ADP contacts are provided by residues 187–189 (GAE), R213, and 215–217 (KKH). Substrate is bound by residues E224, R245, and 251–254 (HIQR).

Belongs to the phosphofructokinase type A (PFKA) family. ATP-dependent PFK group I subfamily. Prokaryotic clade 'B1' sub-subfamily. In terms of assembly, homotetramer. Requires Mg(2+) as cofactor.

The protein resides in the cytoplasm. It catalyses the reaction beta-D-fructose 6-phosphate + ATP = beta-D-fructose 1,6-bisphosphate + ADP + H(+). Its pathway is carbohydrate degradation; glycolysis; D-glyceraldehyde 3-phosphate and glycerone phosphate from D-glucose: step 3/4. Its activity is regulated as follows. Allosterically activated by ADP and other diphosphonucleosides, and allosterically inhibited by phosphoenolpyruvate. Functionally, catalyzes the phosphorylation of D-fructose 6-phosphate to fructose 1,6-bisphosphate by ATP, the first committing step of glycolysis. The protein is ATP-dependent 6-phosphofructokinase of Staphylococcus carnosus (strain TM300).